We begin with the raw amino-acid sequence, 208 residues long: Ribosomal RNA large subunit methyltransferase E (208 aa).

S-adenosyl-L-methionine-binding residues include Gly63, Trp65, Asp83, Asp99, and Asp124. The active-site Proton acceptor is the Lys164.

This sequence belongs to the class I-like SAM-binding methyltransferase superfamily. RNA methyltransferase RlmE family.

It is found in the cytoplasm. The catalysed reaction is uridine(2552) in 23S rRNA + S-adenosyl-L-methionine = 2'-O-methyluridine(2552) in 23S rRNA + S-adenosyl-L-homocysteine + H(+). Specifically methylates the uridine in position 2552 of 23S rRNA at the 2'-O position of the ribose in the fully assembled 50S ribosomal subunit. The polypeptide is Ribosomal RNA large subunit methyltransferase E (Salmonella paratyphi A (strain ATCC 9150 / SARB42)).